Reading from the N-terminus, the 39-residue chain is Large ribosomal subunit protein bL36 (39 aa).

Belongs to the bacterial ribosomal protein bL36 family.

This chain is Large ribosomal subunit protein bL36, found in Levilactobacillus brevis (strain ATCC 367 / BCRC 12310 / CIP 105137 / JCM 1170 / LMG 11437 / NCIMB 947 / NCTC 947) (Lactobacillus brevis).